We begin with the raw amino-acid sequence, 285 residues long: Aspartate/glutamate leucyltransferase (285 aa).

This sequence belongs to the R-transferase family. Bpt subfamily.

It localises to the cytoplasm. It catalyses the reaction N-terminal L-glutamyl-[protein] + L-leucyl-tRNA(Leu) = N-terminal L-leucyl-L-glutamyl-[protein] + tRNA(Leu) + H(+). The catalysed reaction is N-terminal L-aspartyl-[protein] + L-leucyl-tRNA(Leu) = N-terminal L-leucyl-L-aspartyl-[protein] + tRNA(Leu) + H(+). In terms of biological role, functions in the N-end rule pathway of protein degradation where it conjugates Leu from its aminoacyl-tRNA to the N-termini of proteins containing an N-terminal aspartate or glutamate. The sequence is that of Aspartate/glutamate leucyltransferase from Dinoroseobacter shibae (strain DSM 16493 / NCIMB 14021 / DFL 12).